A 335-amino-acid chain; its full sequence is Adenine deaminase (335 aa).

Zn(2+) contacts are provided by His-17, His-19, and His-197. Catalysis depends on Glu-200, which acts as the Proton donor. Asp-278 serves as a coordination point for Zn(2+). Residue Asp-279 coordinates substrate.

It belongs to the metallo-dependent hydrolases superfamily. Adenosine and AMP deaminases family. Adenine deaminase type 2 subfamily. Zn(2+) is required as a cofactor.

The catalysed reaction is adenine + H2O + H(+) = hypoxanthine + NH4(+). In terms of biological role, catalyzes the hydrolytic deamination of adenine to hypoxanthine. Plays an important role in the purine salvage pathway and in nitrogen catabolism. This Marinomonas sp. (strain MWYL1) protein is Adenine deaminase.